We begin with the raw amino-acid sequence, 1227 residues long: Beta-alanyl-bioamine nonribosomal peptide synthetase (1227 aa).

Residues Met1 to Leu850 form an adenylation region. Residues Ser851–Glu931 enclose the Carrier domain. Ser892 is modified (O-(pantetheine 4'-phosphoryl)serine). Residues Ser932–Ser1227 are condensation.

Belongs to the NRP synthetase family. The cofactor is pantetheine 4'-phosphate. As to expression, in virgin and paired males, bilaterally expressed in some cells in the head. During pairing, expressed throughout the ventral side of the body probably in ciliated neurons. Highly expressed in virgin females in cells throughout the body and only weakly expressed in sexually mature females. In virgin females, expressed in some cells in the head and on the dorsal surface and lateral edges of body.

The catalysed reaction is tryptamine + beta-alanine + ATP = beta-alanyl-tryptamine + AMP + diphosphate + H(+). The enzyme catalyses beta-alanine + ATP + H(+) = beta-alanyl-5'-AMP + diphosphate. It catalyses the reaction beta-alanyl-5'-AMP + holo-[peptidyl-carrier protein] = beta-alanyl-[peptidyl-carrier protein] + AMP + H(+). It carries out the reaction beta-alanyl-[peptidyl-carrier protein] + tryptamine = beta-alanyl-tryptamine + holo-[peptidyl-carrier protein] + H(+). Its function is as follows. Catalyzes the condensation of beta-alanine with tryptamine to form beta-alanyl-tryptamine (BATT). Beta-alanyl-tryptamine is an essential pheromone produced by the male that stimulates female sexual development during pairing. The chain is Beta-alanyl-bioamine nonribosomal peptide synthetase from Schistosoma mansoni (Blood fluke).